A 232-amino-acid chain; its full sequence is 5'-methylthioadenosine/S-adenosylhomocysteine nucleosidase (232 aa).

Glutamate 12 serves as the catalytic Proton acceptor. Residues glycine 78, valine 153, and 174–175 (ME) contribute to the substrate site. Catalysis depends on aspartate 198, which acts as the Proton donor.

It belongs to the PNP/UDP phosphorylase family. MtnN subfamily.

It carries out the reaction S-adenosyl-L-homocysteine + H2O = S-(5-deoxy-D-ribos-5-yl)-L-homocysteine + adenine. The catalysed reaction is S-methyl-5'-thioadenosine + H2O = 5-(methylsulfanyl)-D-ribose + adenine. It catalyses the reaction 5'-deoxyadenosine + H2O = 5-deoxy-D-ribose + adenine. It participates in amino-acid biosynthesis; L-methionine biosynthesis via salvage pathway; S-methyl-5-thio-alpha-D-ribose 1-phosphate from S-methyl-5'-thioadenosine (hydrolase route): step 1/2. Its function is as follows. Catalyzes the irreversible cleavage of the glycosidic bond in both 5'-methylthioadenosine (MTA) and S-adenosylhomocysteine (SAH/AdoHcy) to adenine and the corresponding thioribose, 5'-methylthioribose and S-ribosylhomocysteine, respectively. Also cleaves 5'-deoxyadenosine, a toxic by-product of radical S-adenosylmethionine (SAM) enzymes, into 5-deoxyribose and adenine. This chain is 5'-methylthioadenosine/S-adenosylhomocysteine nucleosidase, found in Photobacterium profundum (strain SS9).